The following is a 299-amino-acid chain: Bifunctional protein FolD 1 (299 aa).

NADP(+) contacts are provided by residues 168-170 (GRS), S193, and I234.

Belongs to the tetrahydrofolate dehydrogenase/cyclohydrolase family. As to quaternary structure, homodimer.

The enzyme catalyses (6R)-5,10-methylene-5,6,7,8-tetrahydrofolate + NADP(+) = (6R)-5,10-methenyltetrahydrofolate + NADPH. It carries out the reaction (6R)-5,10-methenyltetrahydrofolate + H2O = (6R)-10-formyltetrahydrofolate + H(+). The protein operates within one-carbon metabolism; tetrahydrofolate interconversion. Functionally, catalyzes the oxidation of 5,10-methylenetetrahydrofolate to 5,10-methenyltetrahydrofolate and then the hydrolysis of 5,10-methenyltetrahydrofolate to 10-formyltetrahydrofolate. This Rhizobium etli (strain ATCC 51251 / DSM 11541 / JCM 21823 / NBRC 15573 / CFN 42) protein is Bifunctional protein FolD 1.